Here is a 484-residue protein sequence, read N- to C-terminus: TPR repeat-containing protein YvcD (484 aa).

TPR repeat units lie at residues 21–54, 55–88, and 187–220; these read GQYF…EPED, SEML…LEAE, and WSAY…NEGN.

The sequence is that of TPR repeat-containing protein YvcD (yvcD) from Bacillus subtilis (strain 168).